We begin with the raw amino-acid sequence, 127 residues long: Small ribosomal subunit protein bS6 (127 aa).

Positions 101–127 (PMMKEEKARDLLQGAKADAPAEQPAAA) are disordered. Residues 115 to 127 (AKADAPAEQPAAA) show a composition bias toward low complexity.

This sequence belongs to the bacterial ribosomal protein bS6 family.

Its function is as follows. Binds together with bS18 to 16S ribosomal RNA. The sequence is that of Small ribosomal subunit protein bS6 from Thiobacillus denitrificans (strain ATCC 25259 / T1).